The chain runs to 264 residues: Glutamate racemase (264 aa).

Substrate-binding positions include 10 to 11 (DS) and 42 to 43 (YG). Residue cysteine 73 is the Proton donor/acceptor of the active site. 74 to 75 (NT) is a binding site for substrate. The Proton donor/acceptor role is filled by cysteine 183. Substrate is bound at residue 184 to 185 (TH).

This sequence belongs to the aspartate/glutamate racemases family.

It catalyses the reaction L-glutamate = D-glutamate. Its pathway is cell wall biogenesis; peptidoglycan biosynthesis. Functionally, provides the (R)-glutamate required for cell wall biosynthesis. In Streptococcus pyogenes serotype M3 (strain ATCC BAA-595 / MGAS315), this protein is Glutamate racemase.